An 84-amino-acid polypeptide reads, in one-letter code: Exodeoxyribonuclease 7 small subunit (84 aa).

The protein belongs to the XseB family. Heterooligomer composed of large and small subunits.

The protein localises to the cytoplasm. The catalysed reaction is Exonucleolytic cleavage in either 5'- to 3'- or 3'- to 5'-direction to yield nucleoside 5'-phosphates.. Its function is as follows. Bidirectionally degrades single-stranded DNA into large acid-insoluble oligonucleotides, which are then degraded further into small acid-soluble oligonucleotides. This chain is Exodeoxyribonuclease 7 small subunit, found in Caulobacter vibrioides (strain ATCC 19089 / CIP 103742 / CB 15) (Caulobacter crescentus).